A 154-amino-acid polypeptide reads, in one-letter code: D-ribose pyranase 2 (154 aa).

H20 (proton donor) is an active-site residue. Substrate contacts are provided by residues D28, H98, and 121–123 (WGN).

Belongs to the RbsD / FucU family. RbsD subfamily. In terms of assembly, homodecamer.

It is found in the cytoplasm. It carries out the reaction beta-D-ribopyranose = beta-D-ribofuranose. The protein operates within carbohydrate metabolism; D-ribose degradation; D-ribose 5-phosphate from beta-D-ribopyranose: step 1/2. Its function is as follows. Catalyzes the interconversion of beta-pyran and beta-furan forms of D-ribose. The polypeptide is D-ribose pyranase 2 (Rubrobacter xylanophilus (strain DSM 9941 / JCM 11954 / NBRC 16129 / PRD-1)).